A 326-amino-acid chain; its full sequence is Ribosomal large subunit pseudouridine synthase D (326 aa).

The 74-residue stretch at 18-91 (QRLDQALAEM…IPLDIVYEDE (74 aa)) folds into the S4 RNA-binding domain. Residue D139 is part of the active site.

The protein belongs to the pseudouridine synthase RluA family.

It localises to the cytoplasm. The enzyme catalyses uridine(1911/1915/1917) in 23S rRNA = pseudouridine(1911/1915/1917) in 23S rRNA. Its function is as follows. Responsible for synthesis of pseudouridine from uracil at positions 1911, 1915 and 1917 in 23S ribosomal RNA. The sequence is that of Ribosomal large subunit pseudouridine synthase D (rluD) from Shigella flexneri.